The primary structure comprises 896 residues: Alanine--tRNA ligase (896 aa).

Zn(2+) is bound by residues His-574, His-578, Cys-677, and His-681.

This sequence belongs to the class-II aminoacyl-tRNA synthetase family. Zn(2+) is required as a cofactor.

The protein localises to the cytoplasm. The enzyme catalyses tRNA(Ala) + L-alanine + ATP = L-alanyl-tRNA(Ala) + AMP + diphosphate. Functionally, catalyzes the attachment of alanine to tRNA(Ala) in a two-step reaction: alanine is first activated by ATP to form Ala-AMP and then transferred to the acceptor end of tRNA(Ala). Also edits incorrectly charged Ser-tRNA(Ala) and Gly-tRNA(Ala) via its editing domain. This Mycoplasma capricolum subsp. capricolum (strain California kid / ATCC 27343 / NCTC 10154) protein is Alanine--tRNA ligase.